Consider the following 309-residue polypeptide: Porphobilinogen deaminase (309 aa).

Cysteine 241 is subject to S-(dipyrrolylmethanemethyl)cysteine.

It belongs to the HMBS family. Monomer. Dipyrromethane is required as a cofactor.

The enzyme catalyses 4 porphobilinogen + H2O = hydroxymethylbilane + 4 NH4(+). Its pathway is porphyrin-containing compound metabolism; protoporphyrin-IX biosynthesis; coproporphyrinogen-III from 5-aminolevulinate: step 2/4. Functionally, tetrapolymerization of the monopyrrole PBG into the hydroxymethylbilane pre-uroporphyrinogen in several discrete steps. In Bacillus thuringiensis subsp. konkukian (strain 97-27), this protein is Porphobilinogen deaminase.